Reading from the N-terminus, the 259-residue chain is Phosphate import ATP-binding protein PstB (259 aa).

The ABC transporter domain occupies 13 to 254 (IQVRDLNFYY…PAQRQTEDYI (242 aa)). Residue 45 to 52 (GPSGCGKS) coordinates ATP.

Belongs to the ABC transporter superfamily. Phosphate importer (TC 3.A.1.7) family. The complex is composed of two ATP-binding proteins (PstB), two transmembrane proteins (PstC and PstA) and a solute-binding protein (PstS).

It is found in the cell inner membrane. The catalysed reaction is phosphate(out) + ATP + H2O = ADP + 2 phosphate(in) + H(+). In terms of biological role, part of the ABC transporter complex PstSACB involved in phosphate import. Responsible for energy coupling to the transport system. This Edwardsiella tarda protein is Phosphate import ATP-binding protein PstB.